The sequence spans 106 residues: Nucleoid-associated protein Smlt1015 (106 aa).

Positions Ile-81–Phe-106 are disordered.

Belongs to the YbaB/EbfC family. In terms of assembly, homodimer.

The protein resides in the cytoplasm. It is found in the nucleoid. Its function is as follows. Binds to DNA and alters its conformation. May be involved in regulation of gene expression, nucleoid organization and DNA protection. This chain is Nucleoid-associated protein Smlt1015, found in Stenotrophomonas maltophilia (strain K279a).